The chain runs to 122 residues: Small ribosomal subunit protein uS13 (122 aa).

Residues 97–122 (PVRGQRTHTNAKTRKGRSKLPIAGKK) form a disordered region.

It belongs to the universal ribosomal protein uS13 family. In terms of assembly, part of the 30S ribosomal subunit. Forms a loose heterodimer with protein S19. Forms two bridges to the 50S subunit in the 70S ribosome.

Functionally, located at the top of the head of the 30S subunit, it contacts several helices of the 16S rRNA. In the 70S ribosome it contacts the 23S rRNA (bridge B1a) and protein L5 of the 50S subunit (bridge B1b), connecting the 2 subunits; these bridges are implicated in subunit movement. Contacts the tRNAs in the A and P-sites. The sequence is that of Small ribosomal subunit protein uS13 from Wolbachia pipientis subsp. Culex pipiens (strain wPip).